Reading from the N-terminus, the 67-residue chain is Amphipathic peptide Tx348 (67 aa).

A signal peptide spans 1–23 (MKSQAFFLLFLVVLLLATTQSEA). The residue at position 33 (phenylalanine 33) is a Phenylalanine amide. Positions 37-67 (SMRNMDTMKYLYDPSLSAADLKTLQKLMENY) are excised as a propeptide.

Belongs to the non-disulfide-bridged peptide (NDBP) superfamily. Short antimicrobial peptide (group 4) family. Expressed by the venom gland.

The protein localises to the secreted. It localises to the target cell membrane. Its function is as follows. Amphipathic peptide that has antibacterial activities. In Buthus israelis (Israeli scorpion), this protein is Amphipathic peptide Tx348.